The following is a 703-amino-acid chain: Cyclomaltodextrin glucanotransferase (703 aa).

The N-terminal stretch at 1–29 is a signal peptide; that stretch reads MNDLNDFLKTILLSFIFFLLLSLPTVAEA. The interval 30–160 is A1; the sequence is DVTNKVNYSK…GIKVIMDFTP (131 aa). Residues Asp-52, Asn-54, Asn-57, and Asn-58 each coordinate Ca(2+). Cys-68 and Cys-75 are disulfide-bonded. Gly-76 and Asp-78 together coordinate Ca(2+). 122–123 lines the substrate pocket; that stretch reads YW. A Ca(2+)-binding site is contributed by Asn-161. Residues 161 to 224 form a b region; sequence NHSSPALETN…NLYDLADYDL (64 aa). Position 162 (His-162) interacts with substrate. Position 212 (Ile-212) interacts with Ca(2+). Residue 215 to 218 coordinates substrate; it reads NLYD. Asp-221 contributes to the Ca(2+) binding site. The segment at 225-428 is A2; it reads NNTVMDQYLK…LRQTNSALGY (204 aa). Arg-249 is a substrate binding site. The active-site Nucleophile is Asp-251. 254–255 is a substrate binding site; that stretch reads KH. His-255 is a Ca(2+) binding site. The Proton donor role is filled by Glu-279. The substrate site is built by His-349, Asp-393, and Arg-397. Residues 429-516 form a c region; it reads GTTTERWLNE…SVAVWQVSNP (88 aa). A d region spans residues 517-600; that stretch reads STSPLIGQVG…SPTYKEFEVL (84 aa). The 79-residue stretch at 520–598 folds into the IPT/TIG domain; the sequence is PLIGQVGPMM…IKSPTYKEFE (79 aa). The CBM20 domain maps to 599–703; that stretch reads VLSGNQVSVR…TGTDTVMINW (105 aa). Residues 601-703 are e; the sequence is SGNQVSVRFG…TGTDTVMINW (103 aa).

The protein belongs to the glycosyl hydrolase 13 family. In terms of assembly, monomer. Requires Ca(2+) as cofactor.

Its subcellular location is the secreted. It catalyses the reaction Cyclizes part of a (1-&gt;4)-alpha-D-glucan chain by formation of a (1-&gt;4)-alpha-D-glucosidic bond.. The sequence is that of Cyclomaltodextrin glucanotransferase (cgt) from Bacillus sp. (strain 1-1).